The sequence spans 288 residues: Stage IV sporulation protein FB (288 aa).

Residues 1-10 (MNKWLDLILK) are Mother cell cytoplasmic-facing. Residues 11-30 (IHVHPFLWIIAALGLLTGHM) form a helical membrane-spanning segment. Residue Lys31 is a topological domain, forespore intermembrane space. A helical transmembrane segment spans residues 32 to 56 (ALLCLLLIVLIHELGHAALAVFFSW). Residue His43 participates in Zn(2+) binding. Glu44 is a catalytic residue. A Zn(2+)-binding site is contributed by His47. The Mother cell cytoplasmic segment spans residues 57 to 83 (RIKRVFLLPFGGTVEVEEHGNRPLKEE). A helical membrane pass occupies residues 84–105 (FAVIIAGPLQHIWLQFAAWMLA). Over 106–126 (EVSVIHQHTFELFTFYNLSIL) the chain is Forespore intermembrane space. Residues 127 to 146 (FVNLLPIWPLDGGKLLFLLF) form a helical membrane-spanning segment. Residue Asp137 coordinates Zn(2+). Residues 147–161 (SKQLPFQKAHRLNLK) are Mother cell cytoplasmic-facing. A helical transmembrane segment spans residues 162-178 (TSLCFCLLLGCWVLFVI). Residue Pro179 is a topological domain, forespore intermembrane space. Residues 180–199 (LQISAWVLFVFLAVSLFEEY) traverse the membrane as a helical segment. At 200-288 (RQRHYIHVRF…SSMEELLLPY (89 aa)) the chain is on the mother cell cytoplasmic side.

Belongs to the peptidase M50B family. As to quaternary structure, forms a complex with SpoIVFA and BofA localized in the mother-cell membrane surrounding the forespore. The cofactor is Zn(2+).

The protein localises to the forespore outer membrane. Functionally, implicated in the coupling of mother cell to forespore gene expression. Required for spore formation. Processes the pro-sigma K factor. The polypeptide is Stage IV sporulation protein FB (spoIVFB) (Bacillus subtilis (strain 168)).